The sequence spans 234 residues: RNA-binding protein pno1 (234 aa).

The segment at 1–39 is disordered; sequence MPTQDSAAKQADDGFQLVQKKSRKRKMTMDMDDADPKAG. The KH domain maps to 158 to 207; the sequence is LARCIGRLAGKGGRTKFTIENVTKTRIVLADSKVHILGSYQNIRAARTAL.

The protein belongs to the PNO1 family.

The protein resides in the nucleus. It is found in the nucleolus. The chain is RNA-binding protein pno1 from Ixodes scapularis (Black-legged tick).